The following is a 407-amino-acid chain: Inhibin beta B chain (407 aa).

Positions 1–28 (MDGLPGRALGAACLLLLAAGWLGPEAWG) are cleaved as a signal peptide. The disordered stretch occupies residues 26-62 (AWGSPTPPPTPAAPPPPPPPGSPGGSQDTCTSCGGFR). Positions 29–292 (SPTPPPTPAA…GDSRHRIRKR (264 aa)) are excised as a propeptide. A compositionally biased stretch (pro residues) spans 30–47 (PTPPPTPAAPPPPPPPGS). N93 is a glycosylation site (N-linked (GlcNAc...) asparagine). 4 disulfide bridges follow: C296/C304, C303/C372, C332/C404, and C336/C406.

This sequence belongs to the TGF-beta family. In terms of assembly, dimeric, linked by one or more disulfide bonds. Inhibin B is a dimer of alpha and beta-B. Activin B is a homodimer of beta-B. Activin AB is a dimer of beta-A and beta-B. Interacts with FST and FSTL3. Activin B interacts with BMPR2.

It is found in the secreted. Functionally, inhibins and activins inhibit and activate, respectively, the secretion of follitropin by the pituitary gland. Inhibins/activins are involved in regulating a number of diverse functions such as hypothalamic and pituitary hormone secretion, gonadal hormone secretion, germ cell development and maturation, erythroid differentiation, insulin secretion, nerve cell survival, embryonic axial development or bone growth, depending on their subunit composition. Inhibins appear to oppose the functions of activins. Its function is as follows. Activin B is a dimer of alpha and beta-B that plays a role in several essential biological processes including embryonic development, stem cell maintenance and differentiation, haematopoiesis, cell proliferation and wound healing. Signals through type I receptor ACVR1C, abundantly expressed in pancreatic beta cells, and type II receptors like ACVR2A or BMPR2. Upon ligand binding, these receptors phosphorylate intracellular signaling mediators SMAD2 and SMAD3, which form a complex with SMAD4, translocate to the nucleus, and regulate gene expression. Plays a crucial role in the induction of hepcidin by inflammation through activation of ACVR1C and subsequent phosphorylation of SMAD1/5/8. Regulates adipocyte lipid metabolism by decreasing non-esterified fatty acids and glycerol release and increases intracellular triglyceride content. Stimulates wound healing by promoting cell migration and hair follicle regeneration through the JNK and ERK signaling pathways downstream of RHOA. In terms of biological role, inhibin B is a dimer of alpha and beta-B that plays a crucial role in the regulation of the reproductive system by inhibiting the secretion of follicle-stimulating hormone (FSH) from the anterior pituitary gland. Thereby, maintains reproductive homeostasis in both males and females. Acts as a more potent suppressor of FSH release than inhibin A. Functions as competitive receptor antagonist binding activin type II receptors with high affinity in the presence of the TGF-beta type III coreceptor/TGFBR3L. The sequence is that of Inhibin beta B chain (INHBB) from Homo sapiens (Human).